The primary structure comprises 330 residues: G-protein coupled receptor 157 (330 aa).

Residues 1-15 (MPTPAPPTELLPWER) are Extracellular-facing. A helical membrane pass occupies residues 16 to 36 (AVVLLSCVLSALGSGLLVATH). Residues 37-48 (ALWPDLRSRARR) are Cytoplasmic-facing. A helical transmembrane segment spans residues 49–69 (LLLFLSLADLLSAASYFYGVL). Residues 70-87 (QDFAGTSWDCVLQGALST) are Extracellular-facing. A helical transmembrane segment spans residues 88-108 (FANTSSFFWTVAIALYLYLNI). Residues 109-119 (VRATRGPCTDH) are Cytoplasmic-facing. The chain crosses the membrane as a helical span at residues 120-140 (LVWAFHLISWGVPLAITVAAV). The Extracellular segment spans residues 141–166 (CLKKIGYDASDVSVGWCWINLEAEDR). Residues 167 to 187 (VLWMLLTGKLWEMLAYILLPL) traverse the membrane as a helical segment. Residues 188-227 (LYLLVRKHINRAHQALSEYRPIWEGRQLQRGSPTSMADKK) are Cytoplasmic-facing. The chain crosses the membrane as a helical span at residues 228–250 (LILIPFIFICLRVWSTVRFVLTL). Residues 251 to 259 (CGSPVVQAP) lie on the Extracellular side of the membrane. The helical transmembrane segment at 260–282 (VLVVLHGIGNTFQGGANCIMFVL) threads the bilayer. Residues 283 to 330 (CTRAVRTRLFSLCCCYPRPPTQNPPGASIPPKMGESQESRRTPEVPST) are Cytoplasmic-facing. Residues 303–330 (TQNPPGASIPPKMGESQESRRTPEVPST) form a disordered region. The span at 317-330 (ESQESRRTPEVPST) shows a compositional bias: basic and acidic residues.

Belongs to the G-protein coupled receptor 2 family.

The protein resides in the cell projection. The protein localises to the cilium membrane. Its function is as follows. Orphan receptor that promotes neuronal differentiation of radial glial progenitors (RGPs). The activity of this receptor is mediated by a G(q)-protein that activates a phosphatidylinositol-calcium second messenger. In Rattus norvegicus (Rat), this protein is G-protein coupled receptor 157 (Gpr157).